A 187-amino-acid chain; its full sequence is Ribosome-recycling factor (187 aa).

This sequence belongs to the RRF family.

The protein resides in the cytoplasm. Responsible for the release of ribosomes from messenger RNA at the termination of protein biosynthesis. May increase the efficiency of translation by recycling ribosomes from one round of translation to another. This chain is Ribosome-recycling factor, found in Mycoplasmopsis pulmonis (strain UAB CTIP) (Mycoplasma pulmonis).